The sequence spans 644 residues: 3D-(3,5/4)-trihydroxycyclohexane-1,2-dione hydrolase (644 aa).

Glutamate 65 provides a ligand contact to thiamine diphosphate. Positions 442-522 are thiamine pyrophosphate binding; it reads SLPGDLQRMW…INVLLFDNSG (81 aa). Residues aspartate 493 and asparagine 520 each coordinate Mg(2+).

It belongs to the TPP enzyme family. The cofactor is Mg(2+). It depends on thiamine diphosphate as a cofactor.

It catalyses the reaction 3D-3,5/4-trihydroxycyclohexane-1,2-dione + H2O = 5-deoxy-D-glucuronate + H(+). It functions in the pathway polyol metabolism; myo-inositol degradation into acetyl-CoA; acetyl-CoA from myo-inositol: step 3/7. In terms of biological role, involved in the cleavage of the C1-C2 bond of 3D-(3,5/4)-trihydroxycyclohexane-1,2-dione (THcHDO) to yield 5-deoxy-glucuronate (5DG). This chain is 3D-(3,5/4)-trihydroxycyclohexane-1,2-dione hydrolase, found in Bacillus thuringiensis (strain Al Hakam).